Reading from the N-terminus, the 273-residue chain is DnaJ homolog subfamily C member 27 (273 aa).

Residues 23 to 30 (GNAEVGKS), 71 to 75 (DMAGH), and 134 to 137 (NKID) each bind GTP. Positions 217-273 (DSWDMLGVKPGATRDEVNKAYRKLAVLLHPDKCVAPGSEDAFKAVVNARTALLKNIK) constitute a J domain.

This sequence belongs to the small GTPase superfamily. Rab family.

The protein localises to the nucleus. In terms of biological role, GTPase possibly involved in regulation of the MEK/ERK pathway. This chain is DnaJ homolog subfamily C member 27 (DNAJC27), found in Gallus gallus (Chicken).